A 106-amino-acid chain; its full sequence is Ig kappa chain C region, B allele (106 aa).

The Ig-like domain maps to 5–102 (PTVSIFPPST…SSSPVVKSFN (98 aa)). A disulfide bond links Cys-26 and Cys-86.

In Rattus norvegicus (Rat), this protein is Ig kappa chain C region, B allele.